The primary structure comprises 505 residues: ATP synthase subunit alpha (505 aa).

Residues 118-138 (VDGLGPINTTNTRPIESPAPG) are disordered. An ATP-binding site is contributed by 172–179 (GDRQTGKT).

This sequence belongs to the ATPase alpha/beta chains family. In terms of assembly, F-type ATPases have 2 components, CF(1) - the catalytic core - and CF(0) - the membrane proton channel. CF(1) has five subunits: alpha(3), beta(3), gamma(1), delta(1), epsilon(1). CF(0) has three main subunits: a(1), b(2) and c(9-12). The alpha and beta chains form an alternating ring which encloses part of the gamma chain. CF(1) is attached to CF(0) by a central stalk formed by the gamma and epsilon chains, while a peripheral stalk is formed by the delta and b chains.

The protein resides in the cell membrane. It catalyses the reaction ATP + H2O + 4 H(+)(in) = ADP + phosphate + 5 H(+)(out). Its function is as follows. Produces ATP from ADP in the presence of a proton gradient across the membrane. The alpha chain is a regulatory subunit. This chain is ATP synthase subunit alpha, found in Bacillus cereus (strain ATCC 14579 / DSM 31 / CCUG 7414 / JCM 2152 / NBRC 15305 / NCIMB 9373 / NCTC 2599 / NRRL B-3711).